Consider the following 239-residue polypeptide: Adapter protein MecA (239 aa).

The span at 118 to 128 shows a compositional bias: basic and acidic residues; that stretch reads EQRTKEKEAQG. Residues 118-137 are disordered; the sequence is EQRTKEKEAQGSKRQKSSAR.

It belongs to the MecA family. Homodimer.

Functionally, enables the recognition and targeting of unfolded and aggregated proteins to the ClpC protease or to other proteins involved in proteolysis. The polypeptide is Adapter protein MecA (Staphylococcus aureus (strain COL)).